We begin with the raw amino-acid sequence, 355 residues long: Protein pelota homolog (355 aa).

The protein belongs to the eukaryotic release factor 1 family. Pelota subfamily. Monomer. Requires a divalent metal cation as cofactor.

It localises to the cytoplasm. May function in recognizing stalled ribosomes, interact with stem-loop structures in stalled mRNA molecules, and effect endonucleolytic cleavage of the mRNA. May play a role in the release non-functional ribosomes and degradation of damaged mRNAs. Has endoribonuclease activity. The chain is Protein pelota homolog from Halorubrum lacusprofundi (strain ATCC 49239 / DSM 5036 / JCM 8891 / ACAM 34).